We begin with the raw amino-acid sequence, 431 residues long: Enolase (431 aa).

Residue glutamine 166 participates in (2R)-2-phosphoglycerate binding. Catalysis depends on glutamate 208, which acts as the Proton donor. Positions 245, 288, and 315 each coordinate Mg(2+). (2R)-2-phosphoglycerate is bound by residues lysine 340, arginine 369, serine 370, and lysine 391. Residue lysine 340 is the Proton acceptor of the active site.

Belongs to the enolase family. Mg(2+) is required as a cofactor.

It localises to the cytoplasm. The protein resides in the secreted. The protein localises to the cell surface. The enzyme catalyses (2R)-2-phosphoglycerate = phosphoenolpyruvate + H2O. It functions in the pathway carbohydrate degradation; glycolysis; pyruvate from D-glyceraldehyde 3-phosphate: step 4/5. Its function is as follows. Catalyzes the reversible conversion of 2-phosphoglycerate (2-PG) into phosphoenolpyruvate (PEP). It is essential for the degradation of carbohydrates via glycolysis. This is Enolase from Clostridium acetobutylicum (strain ATCC 824 / DSM 792 / JCM 1419 / IAM 19013 / LMG 5710 / NBRC 13948 / NRRL B-527 / VKM B-1787 / 2291 / W).